We begin with the raw amino-acid sequence, 81 residues long: ATP synthase subunit c, chloroplastic (81 aa).

2 helical membrane-spanning segments follow: residues 3–23 (PLIP…ASIG) and 57–77 (LAFM…LLFA).

Belongs to the ATPase C chain family. In terms of assembly, F-type ATPases have 2 components, F(1) - the catalytic core - and F(0) - the membrane proton channel. F(1) has five subunits: alpha(3), beta(3), gamma(1), delta(1), epsilon(1). F(0) has four main subunits: a(1), b(1), b'(1) and c(10-14). The alpha and beta chains form an alternating ring which encloses part of the gamma chain. F(1) is attached to F(0) by a central stalk formed by the gamma and epsilon chains, while a peripheral stalk is formed by the delta, b and b' chains.

Its subcellular location is the plastid. The protein localises to the chloroplast thylakoid membrane. F(1)F(0) ATP synthase produces ATP from ADP in the presence of a proton or sodium gradient. F-type ATPases consist of two structural domains, F(1) containing the extramembraneous catalytic core and F(0) containing the membrane proton channel, linked together by a central stalk and a peripheral stalk. During catalysis, ATP synthesis in the catalytic domain of F(1) is coupled via a rotary mechanism of the central stalk subunits to proton translocation. Its function is as follows. Key component of the F(0) channel; it plays a direct role in translocation across the membrane. A homomeric c-ring of between 10-14 subunits forms the central stalk rotor element with the F(1) delta and epsilon subunits. This chain is ATP synthase subunit c, chloroplastic, found in Cycas taitungensis (Prince sago).